The sequence spans 230 residues: UPF0173 metal-dependent hydrolase MK1542 (230 aa).

Belongs to the UPF0173 family.

This Methanopyrus kandleri (strain AV19 / DSM 6324 / JCM 9639 / NBRC 100938) protein is UPF0173 metal-dependent hydrolase MK1542.